We begin with the raw amino-acid sequence, 297 residues long: Ribosomal RNA small subunit methyltransferase H (297 aa).

S-adenosyl-L-methionine contacts are provided by residues Gly36–His38, Asp56, Leu90, Asp104, and His111.

Belongs to the methyltransferase superfamily. RsmH family.

The protein localises to the cytoplasm. It carries out the reaction cytidine(1402) in 16S rRNA + S-adenosyl-L-methionine = N(4)-methylcytidine(1402) in 16S rRNA + S-adenosyl-L-homocysteine + H(+). Its function is as follows. Specifically methylates the N4 position of cytidine in position 1402 (C1402) of 16S rRNA. In Dictyoglomus thermophilum (strain ATCC 35947 / DSM 3960 / H-6-12), this protein is Ribosomal RNA small subunit methyltransferase H.